A 128-amino-acid chain; its full sequence is UPF0325 protein NT01EI_0832 (128 aa).

This sequence belongs to the UPF0325 family.

In Edwardsiella ictaluri (strain 93-146), this protein is UPF0325 protein NT01EI_0832.